An 88-amino-acid polypeptide reads, in one-letter code: Small ribosomal subunit protein uS17 (88 aa).

The protein belongs to the universal ribosomal protein uS17 family. Part of the 30S ribosomal subunit.

In terms of biological role, one of the primary rRNA binding proteins, it binds specifically to the 5'-end of 16S ribosomal RNA. The chain is Small ribosomal subunit protein uS17 from Pseudomonas savastanoi pv. phaseolicola (strain 1448A / Race 6) (Pseudomonas syringae pv. phaseolicola (strain 1448A / Race 6)).